Consider the following 252-residue polypeptide: Segregation and condensation protein A (252 aa).

The disordered stretch occupies residues 117-136; sequence EREEERQNAFTKPPSDLSEF.

It belongs to the ScpA family. As to quaternary structure, component of a cohesin-like complex composed of ScpA, ScpB and the Smc homodimer, in which ScpA and ScpB bind to the head domain of Smc. The presence of the three proteins is required for the association of the complex with DNA.

The protein resides in the cytoplasm. Its function is as follows. Participates in chromosomal partition during cell division. May act via the formation of a condensin-like complex containing Smc and ScpB that pull DNA away from mid-cell into both cell halves. In Bacillus pumilus (strain SAFR-032), this protein is Segregation and condensation protein A.